The sequence spans 196 residues: MLFTFFDPIEYAAKTVNKNAPTIPMTDIFRNYKDYFKRALAGYRLRTYYIKGSPRPEELANAIYGNPQLYWVLLMCNDNYDPYYGWITSQEAAYQASIQKYKNVGGDQIVYHVNENGEKFYNLISYDDNPYVWYDKGDKARKYPQYEGALAAVDTYEAAVLENEKLRQIKIIAKSDINSFMNDLIRIMEKSYGNDK.

Part of the baseplate macromolecular complex which consists of gp5, gp5.4, gp27 (central spike complex); gp6, gp25, gp53 (inner baseplate); gp7, gp8 (intermediate baseplate); gp9, gp10, gp11, gp12 (peripheral); gp48 and gp54 (proximal region of the tail tube). Interacts with gp25 and with the (gp6)2-gp7 heterotrimeric molecule.

It is found in the virion. In terms of biological role, baseplate protein that is located next to the tail tube (inner baseplate). Involved in the tail assembly. Involved in the tail assembly. In Enterobacteria phage T4 (Bacteriophage T4), this protein is Baseplate wedge protein gp53 (53).